A 217-amino-acid polypeptide reads, in one-letter code: Ras-related protein Rab-19 (217 aa).

GTP is bound by residues Ser26, Val28, Gly29, Lys30, Thr31, Cys32, Tyr42, Thr43, Glu44, Thr45, and Thr49. Thr31 serves as a coordination point for Mg(2+). The Switch 1 motif lies at 39–54; that stretch reads SGVYTETQQNTIGVDF. Residues Thr49 and Asp72 each contribute to the Mg(2+) site. Positions 74 to 89 match the Switch 2 motif; sequence AGQERFRTITQSYYRS. GTP-binding residues include Gly75, Asn130, Lys131, Asp133, Ser161, Ala162, and Lys163. S-geranylgeranyl cysteine attachment occurs at residues Cys215 and Cys217. At Cys217 the chain carries Cysteine methyl ester.

It belongs to the small GTPase superfamily. Rab family. Mg(2+) serves as cofactor.

Its subcellular location is the cell membrane. The enzyme catalyses GTP + H2O = GDP + phosphate + H(+). Its activity is regulated as follows. Regulated by guanine nucleotide exchange factors (GEFs) which promote the exchange of bound GDP for free GTP. Regulated by GTPase activating proteins (GAPs) which increase the GTP hydrolysis activity. Inhibited by GDP dissociation inhibitors (GDIs). In terms of biological role, the small GTPases Rab are key regulators of intracellular membrane trafficking, from the formation of transport vesicles to their fusion with membranes. Rabs cycle between an inactive GDP-bound form and an active GTP-bound form that is able to recruit to membranes different set of downstream effectors directly responsible for vesicle formation, movement, tethering and fusion. This Homo sapiens (Human) protein is Ras-related protein Rab-19.